Reading from the N-terminus, the 242-residue chain is Megakaryocyte and platelet inhibitory receptor G6b (242 aa).

A signal peptide spans 1–17 (MALVLPLLPLLLSKVQG). N-linked (GlcNAc...) asparagine glycosylation is found at Asn32 and Asn112. The helical transmembrane segment at 141-161 (VLIPLLGVGLVLGLGVAGVVW) threads the bilayer. 2 short sequence motifs (ITIM motif) span residues 210-215 (LHYADL) and 236-241 (TVYAVV). Tyr212 carries the post-translational modification Phosphotyrosine.

Interacts (via ITIM motif) with PTPN6 and PTPN11. Binds to heparin. Post-translationally, N-glycosylated. In terms of processing, may be O-glycosylated. Phosphorylated. Expressed in mature megakaryocytes and platelets. Not expressed by immature megakaryocytes.

It is found in the cell membrane. Its function is as follows. Inhibitory receptor that acts as a critical regulator of hematopoietic lineage differentiation, megakaryocyte function and platelet production. Inhibits platelet aggregation and activation by agonists such as ADP and collagen-related peptide. This regulation of megakaryocate function as well as platelet production ann activation is done through the inhibition (via the 2 ITIM motifs) of the receptors CLEC1B and GP6:FcRgamma signaling. Appears to operate in a calcium-independent manner. This Mus musculus (Mouse) protein is Megakaryocyte and platelet inhibitory receptor G6b.